Here is a 207-residue protein sequence, read N- to C-terminus: LexA repressor (207 aa).

The H-T-H motif DNA-binding region spans 28–48 (RAEIASRLGFKSANAAEEHLK). Catalysis depends on for autocatalytic cleavage activity residues serine 124 and lysine 161.

This sequence belongs to the peptidase S24 family. Homodimer.

The catalysed reaction is Hydrolysis of Ala-|-Gly bond in repressor LexA.. Represses a number of genes involved in the response to DNA damage (SOS response), including recA and lexA. In the presence of single-stranded DNA, RecA interacts with LexA causing an autocatalytic cleavage which disrupts the DNA-binding part of LexA, leading to derepression of the SOS regulon and eventually DNA repair. This chain is LexA repressor, found in Shewanella amazonensis (strain ATCC BAA-1098 / SB2B).